The chain runs to 133 residues: Brain natriuretic peptide (133 aa).

An N-terminal signal peptide occupies residues 1 to 22 (MVVSFVSICGLLLIFNLPLSTS). Positions 44 to 53 (SMSEETEEDQ) are enriched in acidic residues. Disordered stretches follow at residues 44 to 76 (SMSE…NRDQ) and 93 to 112 (TRKN…FGRR). A disulfide bond links Cys-108 and Cys-124.

The protein belongs to the natriuretic peptide family.

The protein localises to the secreted. Its function is as follows. Cardiac hormone which may function as a paracrine antifibrotic factor in the heart. Also plays a key role in cardiovascular homeostasis through natriuresis, diuresis, vasorelaxation, and inhibition of renin and aldosterone secretion. Has a cGMP-stimulating activity. The sequence is that of Brain natriuretic peptide (nppb) from Takifugu rubripes (Japanese pufferfish).